The following is a 232-amino-acid chain: Fibrillarin-like rRNA/tRNA 2'-O-methyltransferase (232 aa).

S-adenosyl-L-methionine-binding positions include 89-90 (TT), 108-109 (EF), 133-134 (DA), and 153-156 (DIAQ).

It belongs to the methyltransferase superfamily. Fibrillarin family. In terms of assembly, interacts with nop5. Component of box C/D small ribonucleoprotein (sRNP) particles that contain rpl7ae, FlpA and nop5, plus a guide RNA.

In terms of biological role, involved in pre-rRNA and tRNA processing. Utilizes the methyl donor S-adenosyl-L-methionine to catalyze the site-specific 2'-hydroxyl methylation of ribose moieties in rRNA and tRNA. Site specificity is provided by a guide RNA that base pairs with the substrate. Methylation occurs at a characteristic distance from the sequence involved in base pairing with the guide RNA. This Saccharolobus islandicus (strain M.16.27) (Sulfolobus islandicus) protein is Fibrillarin-like rRNA/tRNA 2'-O-methyltransferase.